The sequence spans 214 residues: Response regulator GacA (214 aa).

The region spanning 3–119 (KVLVVDDHDL…EMVQAIRLVF (117 aa)) is the Response regulatory domain. Aspartate 54 bears the 4-aspartylphosphate mark. Residues 143–208 (NNSPFDLLSE…ELALLAVRHG (66 aa)) form the HTH luxR-type domain. Residues 167–186 (VQTISDKLCLSPKTVNTYRY) constitute a DNA-binding region (H-T-H motif).

In terms of processing, phosphorylated by LemA.

Its function is as follows. Forms part of a two-component regulatory system GacA/GacA(LemA). May be involved in lesion formation, swarming and in the production of extracellular protease, syringomycin and N-acyl-L-homoserine lactone (acyl-HSL). In Pseudomonas syringae pv. syringae (strain B728a), this protein is Response regulator GacA (gacA).